A 301-amino-acid chain; its full sequence is uncharacterized protein (301 aa).

9 helical membrane passes run 1-21 (MSWIIFYTVIAALLILDLRII), 33-53 (SVLFSLFYLVIACLFGIYVYY), 72-92 (AMSLDNIFVISIIFQFFKIPW), 101-121 (FGIIGVIIFRAVMIYGGIILI), 124-144 (FAWLLYIFAVILIATGIKTFY), 194-214 (VLIEAIDLVFAIDSIPAIFAI), 220-240 (IIYTSNIFAILGLRALFFCLA), 253-273 (LALILIFISFKIFIHHYIAIP), and 274-294 (EYVAFTVTMTLLLFGIIASII).

This sequence belongs to the TerC family.

The protein localises to the cell membrane. This is an uncharacterized protein from Rickettsia conorii (strain ATCC VR-613 / Malish 7).